A 22-amino-acid polypeptide reads, in one-letter code: 5-methyltetrahydropteroyltriglutamate--homocysteine methyltransferase (22 aa).

This sequence belongs to the vitamin-B12 independent methionine synthase family. It depends on Zn(2+) as a cofactor.

The protein localises to the cytoplasm. It catalyses the reaction 5-methyltetrahydropteroyltri-L-glutamate + L-homocysteine = tetrahydropteroyltri-L-glutamate + L-methionine. It participates in amino-acid biosynthesis; L-methionine biosynthesis via de novo pathway; L-methionine from L-homocysteine (MetE route): step 1/1. Its function is as follows. Catalyzes the transfer of a methyl group from 5-methyltetrahydrofolate to homocysteine resulting in methionine formation. The sequence is that of 5-methyltetrahydropteroyltriglutamate--homocysteine methyltransferase from Pseudotsuga menziesii (Douglas-fir).